The primary structure comprises 707 residues: uncharacterized protein (707 aa).

Disordered stretches follow at residues 15-122 (ALAK…LESY) and 667-707 (ESVQ…DIDE). Basic and acidic residues-rich tracts occupy residues 18–32 (KKNDKIKKKDTDKGI) and 40–52 (EGKDETLKRDVEK). Ser112 bears the Phosphoserine mark. Positions 659–700 (EEQRKLIRESVQQDQEHKEQMRQKKKQALKSDDIELDDLSEE) form a coiled coil. A compositionally biased stretch (acidic residues) spans 692–707 (IELDDLSEEEAEDIDE).

This sequence belongs to the NOC2 family.

It is found in the nucleus. The protein localises to the nucleolus. This is an uncharacterized protein from Schizosaccharomyces pombe (strain 972 / ATCC 24843) (Fission yeast).